The chain runs to 1357 residues: DNA-directed RNA polymerase subunit beta (1357 aa).

This sequence belongs to the RNA polymerase beta chain family. In terms of assembly, the RNAP catalytic core consists of 2 alpha, 1 beta, 1 beta' and 1 omega subunit. When a sigma factor is associated with the core the holoenzyme is formed, which can initiate transcription.

The catalysed reaction is RNA(n) + a ribonucleoside 5'-triphosphate = RNA(n+1) + diphosphate. Its function is as follows. DNA-dependent RNA polymerase catalyzes the transcription of DNA into RNA using the four ribonucleoside triphosphates as substrates. This is DNA-directed RNA polymerase subunit beta from Pseudomonas fluorescens (strain SBW25).